Consider the following 100-residue polypeptide: NADH-quinone oxidoreductase subunit K 2 (100 aa).

3 helical membrane-spanning segments follow: residues 4-24 (LWWF…GVLL), 28-48 (ILVV…NFIA), and 60-80 (IFAI…LGIL).

The protein belongs to the complex I subunit 4L family. In terms of assembly, NDH-1 is composed of 14 different subunits. Subunits NuoA, H, J, K, L, M, N constitute the membrane sector of the complex.

The protein localises to the cell inner membrane. It catalyses the reaction a quinone + NADH + 5 H(+)(in) = a quinol + NAD(+) + 4 H(+)(out). Its function is as follows. NDH-1 shuttles electrons from NADH, via FMN and iron-sulfur (Fe-S) centers, to quinones in the respiratory chain. The immediate electron acceptor for the enzyme in this species is believed to be ubiquinone. Couples the redox reaction to proton translocation (for every two electrons transferred, four hydrogen ions are translocated across the cytoplasmic membrane), and thus conserves the redox energy in a proton gradient. The protein is NADH-quinone oxidoreductase subunit K 2 of Rhizobium etli (strain CIAT 652).